A 155-amino-acid chain; its full sequence is Sec-independent protein translocase protein TatB (155 aa).

Residues 1-21 (MIDLGISKIALIGAVALIVIG) traverse the membrane as a helical segment. Disordered stretches follow at residues 81–103 (ASDF…LPGF) and 131–155 (SGIR…SRKA). Residues 89-98 (SETTGSTSSD) are compositionally biased toward polar residues.

This sequence belongs to the TatB family. As to quaternary structure, the Tat system comprises two distinct complexes: a TatABC complex, containing multiple copies of TatA, TatB and TatC subunits, and a separate TatA complex, containing only TatA subunits. Substrates initially bind to the TatABC complex, which probably triggers association of the separate TatA complex to form the active translocon.

It is found in the cell inner membrane. In terms of biological role, part of the twin-arginine translocation (Tat) system that transports large folded proteins containing a characteristic twin-arginine motif in their signal peptide across membranes. Together with TatC, TatB is part of a receptor directly interacting with Tat signal peptides. TatB may form an oligomeric binding site that transiently accommodates folded Tat precursor proteins before their translocation. The sequence is that of Sec-independent protein translocase protein TatB from Polaromonas naphthalenivorans (strain CJ2).